The sequence spans 265 residues: Pro-opiomelanocortin (265 aa).

A signal peptide spans 1 to 26 (MPRLCSSRSGALLLALLLQASMEVRG). 2 disulfides stabilise this stretch: cysteine 28–cysteine 50 and cysteine 34–cysteine 46. O-linked (GalNAc...) threonine glycosylation is present at threonine 71. Phenylalanine 87 is subject to Phenylalanine amide. Residues 89 to 138 (RRNGSSSSGVGGAAQKREEEVAVGEGPGPRGDDAETGPREDKRSYSMEHF) form a disordered region. N-linked (GlcNAc...) asparagine glycosylation is present at asparagine 91. Positions 106 to 129 (EEEVAVGEGPGPRGDDAETGPRED) are excised as a propeptide. Residues 118–138 (RGDDAETGPREDKRSYSMEHF) show a composition bias toward basic and acidic residues. The residue at position 132 (serine 132) is an N-acetylserine; in Corticotropin. Valine amide is present on valine 144. Position 162 is a phosphoserine (serine 162). Pyrrolidone carboxylic acid (Glu); partial is present on glutamate 173. Residue tyrosine 200 is modified to Sulfotyrosine. Positions 209–240 (EAAEKKDSGPYKMEHFRWGSPPKDKRYGGFMT) are disordered. Residues 210 to 235 (AAEKKDSGPYKMEHFRWGSPPKDKRY) show a composition bias toward basic and acidic residues.

It belongs to the POMC family. In terms of processing, specific enzymatic cleavages at paired basic residues yield the different active peptides. As to expression, ACTH and MSH are produced by the pituitary gland.

It localises to the secreted. Stimulates the adrenal glands to release cortisol. In terms of biological role, anorexigenic peptide. Increases the pigmentation of skin by increasing melanin production in melanocytes. Its function is as follows. Endogenous orexigenic opiate. Functionally, endogenous opiate. The polypeptide is Pro-opiomelanocortin (POMC) (Bos taurus (Bovine)).